The primary structure comprises 323 residues: Secreted frizzled-related protein 3 (323 aa).

The first 32 residues, methionine 1–alanine 32, serve as a signal peptide directing secretion. The 118-residue stretch at alanine 33–proline 150 folds into the FZ domain. 5 cysteine pairs are disulfide-bonded: cysteine 35–cysteine 96, cysteine 43–cysteine 89, cysteine 80–cysteine 119, cysteine 108–cysteine 147, and cysteine 112–cysteine 136. N-linked (GlcNAc...) asparagine glycosylation occurs at asparagine 49. The NTR domain occupies cysteine 178–leucine 298. The interval glycine 299 to serine 323 is disordered. A compositionally biased stretch (polar residues) spans serine 304–serine 323.

Belongs to the secreted frizzled-related protein (sFRP) family. As to quaternary structure, interacts with MYOC. As to expression, expressed in kidney, brain, testis. Weak expression in spleen and heart.

Its subcellular location is the secreted. In terms of biological role, soluble frizzled-related proteins (sFRPS) function as modulators of Wnt signaling through direct interaction with Wnts. They have a role in regulating cell growth and differentiation in specific cell types. SFRP3/FRZB appears to be involved in limb skeletogenesis. Antagonist of Wnt8 signaling. Regulates chondrocyte maturation and long bone development. The sequence is that of Secreted frizzled-related protein 3 (Frzb) from Mus musculus (Mouse).